Here is a 146-residue protein sequence, read N- to C-terminus: Globin (146 aa).

The residue at position 1 (alanine 1) is an N-acetylalanine. Residues alanine 1 to serine 146 form the Globin domain. Positions 65 and 97 each coordinate heme b.

Belongs to the globin family. Homodimer.

This Buccinum undatum (Common whelk) protein is Globin.